The chain runs to 722 residues: Solute carrier organic anion transporter family member 4A1 (722 aa).

Positions 1–52 are disordered; it reads MPLHQLGDKPLTFPSPNSAMENGLDHTPPSRRASPGTPLSPGSLRSAAHSPL. The Cytoplasmic portion of the chain corresponds to 1–103; it reads MPLHQLGDKP…PCLQVLNTPK (103 aa). The residue at position 34 (Ser34) is a Phosphoserine. The residue at position 37 (Thr37) is a Phosphothreonine. Phosphoserine occurs at positions 40, 43, 46, and 50. The helical transmembrane segment at 104-124 threads the bilayer; the sequence is GILFFLCAAAFLQGMTVNGFI. Topologically, residues 125-143 are extracellular; sequence NTVITSLERRYDLHSYQSG. The chain crosses the membrane as a helical span at residues 144-164; it reads LIASSYDIAACLCLTFVSYFG. Residues 165-170 lie on the Cytoplasmic side of the membrane; it reads GSGHKP. A helical transmembrane segment spans residues 171-195; that stretch reads RWLGWGVLLMGTGSLVFALPHFTAG. The Extracellular segment spans residues 196-222; sequence RYEVELDAGVRTCPANPGAVCADSTSG. Residues 223–253 form a helical membrane-spanning segment; it reads LSRYQLVFMLGQFLHGVGATPLYTLGVTYLD. Residues 254–272 lie on the Cytoplasmic side of the membrane; sequence ENVKSSCSPVYIAIFYTAA. The chain crosses the membrane as a helical span at residues 273 to 293; that stretch reads ILGPAAGYLIGGALLNIYTEM. Residues 294–307 are Extracellular-facing; sequence GRRTELTTESPLWV. Residues 308–332 form a helical membrane-spanning segment; the sequence is GAWWVGFLGSGAAAFFTAVPILGYP. The Cytoplasmic portion of the chain corresponds to 333 to 378; the sequence is RQLPGSQRYAVMRAAEMHQLKDSSRGEASNPDFGKTIRDLPLSIWL. A helical membrane pass occupies residues 379-400; sequence LLKNPTFILLCLAGATEATLIT. Residues 401 to 420 lie on the Extracellular side of the membrane; it reads GMSTFSPKFLESQFSLSASE. A helical transmembrane segment spans residues 421 to 444; that stretch reads AATLFGYLVVPAGGGGTFLGGFFV. Residues 445-448 lie on the Cytoplasmic side of the membrane; it reads NKLR. A helical membrane pass occupies residues 449 to 471; that stretch reads LRGSAVIKFCLFCTVVSLLGILV. Topologically, residues 472-580 are extracellular; sequence FSLHCPSVPM…TSTCQRKPLL (109 aa). The Kazal-like domain maps to 498-555; sequence LNLTAPCNAACSCQPEHYSPVCGSDGLMYFSLCHAGCPAATETNVDGQKVYRDCSCIP. N-linked (GlcNAc...) asparagine glycosylation is present at Asn499. 3 disulfide bridges follow: Cys504-Cys534, Cys510-Cys530, and Cys519-Cys553. Asn557 is a glycosylation site (N-linked (GlcNAc...) asparagine). Residues 581–603 form a helical membrane-spanning segment; that stretch reads LVFIFVVIFFTFLSSIPALTATL. Over 604 to 612 the chain is Cytoplasmic; the sequence is RCVRDPQRS. A helical membrane pass occupies residues 613 to 638; it reads FALGIQWIVVRILGGIPGPIAFGWVI. Residues 639–671 lie on the Extracellular side of the membrane; that stretch reads DKACLLWQDQCGQQGSCLVYQNSAMSRYILIMG. A helical membrane pass occupies residues 672–689; that stretch reads LLYKVLGVLFFAIACFLY. The Cytoplasmic segment spans residues 690-722; it reads KPLSESSDGLETCLPSQSSAPDSATDSQLQSSV. The interval 703–722 is disordered; sequence LPSQSSAPDSATDSQLQSSV.

This sequence belongs to the organo anion transporter (TC 2.A.60) family. In terms of tissue distribution, widely expressed. Expressed in placental trophoblasts. Expressed in pancreas, kidney, skeletal muscle, liver, lung, brain, heart, colon, small intestine, ovary, testis, prostate, thymus and spleen. In testis, primarily localized to Leydig cells.

Its subcellular location is the cell membrane. The enzyme catalyses 3,3',5-triiodo-L-thyronine(out) + L-glutamate(in) = 3,3',5-triiodo-L-thyronine(in) + L-glutamate(out). It catalyses the reaction L-thyroxine(out) + L-glutamate(in) = L-thyroxine(in) + L-glutamate(out). It carries out the reaction estrone 3-sulfate(out) + L-glutamate(in) = estrone 3-sulfate(in) + L-glutamate(out). The catalysed reaction is taurocholate(out) + L-glutamate(in) = taurocholate(in) + L-glutamate(out). The enzyme catalyses 3,3',5-triiodo-L-thyronine(out) = 3,3',5-triiodo-L-thyronine(in). It catalyses the reaction L-thyroxine(out) = L-thyroxine(in). It carries out the reaction 3,3',5'-triiodo-L-thyronine(out) = 3,3',5'-triiodo-L-thyronine(in). The catalysed reaction is estrone 3-sulfate(out) = estrone 3-sulfate(in). The enzyme catalyses 17beta-estradiol 17-O-(beta-D-glucuronate)(out) = 17beta-estradiol 17-O-(beta-D-glucuronate)(in). It catalyses the reaction taurocholate(out) = taurocholate(in). It carries out the reaction prostaglandin E2(out) = prostaglandin E2(in). Its function is as follows. Organic anion antiporter with apparent broad substrate specificity. Recognizes various substrates including thyroid hormones 3,3',5-triiodo-L-thyronine (T3), L-thyroxine (T4) and 3,3',5'-triiodo-L-thyronine (rT3), conjugated steroids such as estrone 3-sulfate and estradiol 17-beta glucuronide, bile acids such as taurocholate and prostanoids such as prostaglandin E2, likely operating in a tissue-specific manner. May be involved in uptake of metabolites from the circulation into organs such as kidney, liver or placenta. Possibly drives the selective transport of thyroid hormones and estrogens coupled to an outward glutamate gradient across the microvillous membrane of the placenta. The transport mechanism, its electrogenicity and potential tissue-specific counterions remain to be elucidated. The sequence is that of Solute carrier organic anion transporter family member 4A1 (SLCO4A1) from Homo sapiens (Human).